Consider the following 460-residue polypeptide: Carboxypeptidase DacB (460 aa).

An N-terminal signal peptide occupies residues 1 to 28 (MRPTRWRRSTHVAVGVAVLALVVAVVAA). The segment at 39–64 (AAEAVPPAPPPATADPGVVPVDLSAP) is disordered. The Acyl-ester intermediate role is filled by Ser113. Lys116 functions as the Proton acceptor in the catalytic mechanism. The active site involves Ser294.

It belongs to the peptidase S13 family.

Functionally, carboxypeptidase that cleaves terminal D-alanine from peptidoglycan in the mycobacterial cell wall. May cleave L-Lys-D-Ala and/or D-Ala-D-Ala peptide bonds. Exerts important effects on mycobacterial cell morphology and cell division. In Mycolicibacterium smegmatis (strain ATCC 700084 / mc(2)155) (Mycobacterium smegmatis), this protein is Carboxypeptidase DacB.